Reading from the N-terminus, the 164-residue chain is Histone H3-like centromeric protein CENH3 (164 aa).

Over residues 1–11 the composition is skewed to basic residues; it reads MARTKHPAVRK. Residues 1-71 are disordered; sequence MARTKHPAVR…QRKPHRFRPG (71 aa). N6,N6,N6-trimethyllysine; alternate is present on Lys-5. Lys-5 is modified (N6,N6-dimethyllysine; alternate). Residues Lys-5, Lys-19, and Lys-30 each carry the N6-methyllysine; alternate modification. The segment covering 12 to 26 has biased composition (basic and acidic residues); sequence SKAEPKKKLQFERSP. Residue Lys-19 is modified to N6-acetyllysine; alternate. Lys-30 is modified (N6,N6,N6-trimethyllysine; alternate). Lys-30 is subject to N6,N6-dimethyllysine; alternate. The span at 40 to 55 shows a compositional bias: low complexity; it reads TSATTRSAAGTSASGT. Basic residues predominate over residues 60-69; it reads TKQRKPHRFR.

This sequence belongs to the histone H3 family.

It localises to the chromosome. It is found in the centromere. The protein localises to the kinetochore. Functionally, histone H3-like variant which exclusively replaces conventional H3 in the nucleosome core of centromeric chromatin at the inner plate of the kinetochore. Required for recruitment and assembly of kinetochore proteins, mitotic progression and chromosome segregation. This is Histone H3-like centromeric protein CENH3 from Oryza sativa subsp. japonica (Rice).